A 328-amino-acid polypeptide reads, in one-letter code: MKQPVRVAVTGAAGQIGYSLLFRIASGEMLGKDQPVILQLLEIPVEKAQQALKGVMMELDDCAFPLLAGMIGTDDPKVAFKDADYALLVGSRPRGPGMERADLLKVNGEIFIGQGQALNEVASRDVKVLVVGNPANTNAYIAMKSAPDLPAKNFTAMLRLDHNRALTQIAQKAGVAVADIEKLTVWGNHSPTMYADYRFATANGENLKDKINDAEWNKDVFLPTVGKRGAAIIEARGLSSAASAANAAIDHMRDWALGTNGKWVTMGIPSDGSYGIPEGVIYGVPVTCENGEYKRVEGLEIDEFSRERMDKTLQELEEERAAIADMLK.

Residue 11–17 (GAAGQIG) participates in NAD(+) binding. Substrate contacts are provided by arginine 94 and arginine 100. NAD(+) is bound by residues asparagine 107, glutamine 114, and 131-133 (VGN). Residues asparagine 133 and arginine 164 each coordinate substrate. Histidine 189 (proton acceptor) is an active-site residue.

The protein belongs to the LDH/MDH superfamily. MDH type 2 family.

It carries out the reaction (S)-malate + NAD(+) = oxaloacetate + NADH + H(+). Its function is as follows. Catalyzes the reversible oxidation of malate to oxaloacetate. The polypeptide is Malate dehydrogenase (Acinetobacter baylyi (strain ATCC 33305 / BD413 / ADP1)).